A 733-amino-acid polypeptide reads, in one-letter code: Ribosomal protein S6 kinase alpha-2 (733 aa).

A Protein kinase 1 domain is found at 59–318 (FELLKVLGQG…VEEIKRHPFF (260 aa)). ATP is bound by residues 65 to 73 (LGQGSYGKV) and lysine 91. The active-site Proton acceptor is the aspartate 184. Serine 218 carries the post-translational modification Phosphoserine; by PDPK1. Residues 319-388 (VTIDWNKLYR…VASSLVQEPS (70 aa)) enclose the AGC-kinase C-terminal domain. The residue at position 377 (serine 377) is a Phosphoserine. The region spanning 415–672 (YEIKEDIGVG…AVQVLKHPWI (258 aa)) is the Protein kinase 2 domain. ATP-binding positions include 421-429 (IGVGSYSVC) and lysine 444. Residue aspartate 532 is the Proton acceptor of the active site.

Belongs to the protein kinase superfamily. AGC Ser/Thr protein kinase family. S6 kinase subfamily. As to quaternary structure, forms a complex with either MAPK1/ERK2 or MAPK3/ERK1 in quiescent cells. Transiently dissociates following mitogenic stimulation. Interacts with FBXO5; cooperate to induce the metaphase arrest of early blastomeres; increases and stabilizes interaction of FBXO5 with CDC20. Mg(2+) is required as a cofactor. Post-translationally, activated by phosphorylation at Ser-218 by PDPK1. Autophosphorylated on Ser-377, as part of the activation process. May be phosphorylated at Thr-356 and Ser-360 by MAPK1/ERK2 and MAPK3/ERK1. In terms of processing, N-terminal myristoylation results in an activated kinase in the absence of added growth factors.

Its subcellular location is the nucleus. The protein localises to the cytoplasm. It catalyses the reaction L-seryl-[protein] + ATP = O-phospho-L-seryl-[protein] + ADP + H(+). The enzyme catalyses L-threonyl-[protein] + ATP = O-phospho-L-threonyl-[protein] + ADP + H(+). With respect to regulation, upon extracellular signal or mitogen stimulation, phosphorylated at Thr-570 in the C-terminal kinase domain (CTKD) by MAPK1/ERK2 and MAPK3/ERK1. The activated CTKD then autophosphorylates Ser-377, allowing binding of PDPK1, which in turn phosphorylates Ser-218 in the N-terminal kinase domain (NTDK) leading to the full activation of the protein and subsequent phosphorylation of the substrates by the NTKD. In terms of biological role, serine/threonine-protein kinase that acts downstream of ERK (MAPK1/ERK2 and MAPK3/ERK1) signaling and mediates mitogenic and stress-induced activation of transcription factors, regulates translation, and mediates cellular proliferation, survival, and differentiation. May function as tumor suppressor in epithelial ovarian cancer cells. This is Ribosomal protein S6 kinase alpha-2 (Rps6ka2) from Mus musculus (Mouse).